We begin with the raw amino-acid sequence, 727 residues long: Sodium-dependent neutral amino acid transporter SLC6A17 (727 aa).

Residues 1–68 (MPKNSKVTQR…DRPAWNSKLQ (68 aa)) are Cytoplasmic-facing. A phosphoserine mark is found at S13 and S20. Residues 69–89 (YILAQIGFSVGLGNIWRFPYL) form a helical membrane-spanning segment. Residues 90–96 (CQKNGGG) lie on the Extracellular side of the membrane. Residues 97 to 116 (AYLVPYLVLLIIIGIPLFFL) traverse the membrane as a helical segment. The Cytoplasmic portion of the chain corresponds to 117-140 (ELAVGQRIRRGSIGVWHYVCPRLG). A helical membrane pass occupies residues 141–161 (GIGFSSCIVCLFVGLYYNVII). Residues 162 to 224 (GWSVFYFFKS…NSISESGGLN (63 aa)) lie on the Extracellular side of the membrane. N186 carries an N-linked (GlcNAc...) asparagine glycan. The helical transmembrane segment at 225–243 (WKMTVCLLVAWSIVGMAVV) threads the bilayer. Over 244–251 (KGIQSSGK) the chain is Cytoplasmic. A helical transmembrane segment spans residues 252–269 (VMYFSSLFPYVVLACFLV). At 270–304 (RGLLLRGAVDGILHMFTPKLDKMLDPQVWREAATQ) the chain is on the extracellular side. A helical transmembrane segment spans residues 305 to 322 (VFFALGLGFGGVIAFSSY). Topologically, residues 323–333 (NKQDNNCHFDA) are cytoplasmic. A helical transmembrane segment spans residues 334-355 (ALVSFINFFTSVLATLVVFAVL). The Extracellular portion of the chain corresponds to 356–451 (GFKANIMNEK…FIAFTEAMTH (96 aa)). The residue at position 377 (Y377) is a Phosphotyrosine. An N-linked (GlcNAc...) asparagine glycan is attached at N393. The helical transmembrane segment at 452-471 (FPASPFWSVMFFLMLINLGL) threads the bilayer. Topologically, residues 472 to 494 (GSMIGTMAGITTPIIDTFKVPKE) are cytoplasmic. Residues 495–513 (MFTVGCCVFAFFVGLLFVQ) form a helical membrane-spanning segment. Topologically, residues 514 to 528 (RSGNYFVTMFDDYSA) are extracellular. The helical transmembrane segment at 529–549 (TLPLTVIVILENIAVAWIYGT) threads the bilayer. Residues 550 to 569 (KKFMQELTEMLGFRPYRFYF) lie on the Cytoplasmic side of the membrane. A helical transmembrane segment spans residues 570-591 (YMWKFVSPLCMAVLTTASIIQL). Residues 592 to 618 (GVSPPGYSAWIKEEAAERYLYFPNWAM) are Extracellular-facing. A helical membrane pass occupies residues 619–641 (ALLITLIAVATLPIPVVFILRHF). Residues 642-727 (HLLSDGSNTL…LLASTPESEL (86 aa)) are Cytoplasmic-facing. S665 and S701 each carry phosphoserine. The interval 680–727 (VPSEAPSPMPTHRSYLGPGSTSPLESSSHPNGRYGSGYLLASTPESEL) is disordered. Polar residues predominate over residues 698-709 (GSTSPLESSSHP).

The protein belongs to the sodium:neurotransmitter symporter (SNF) (TC 2.A.22) family. In terms of tissue distribution, found exclusively in the central nervous system and is more abundant in the cerebellum and the cerebral cortex. Expressed in PC-12 cell line.

The protein resides in the cytoplasmic vesicle. It localises to the secretory vesicle. The protein localises to the synaptic vesicle membrane. It is found in the postsynapse. Its subcellular location is the presynapse. It catalyses the reaction L-proline(in) + Na(+)(in) = L-proline(out) + Na(+)(out). The enzyme catalyses L-leucine(in) + Na(+)(in) = L-leucine(out) + Na(+)(out). The catalysed reaction is glycine(in) + Na(+)(in) = glycine(out) + Na(+)(out). It carries out the reaction L-alanine(in) + Na(+)(in) = L-alanine(out) + Na(+)(out). It catalyses the reaction L-glutamine(in) + Na(+)(in) = L-glutamine(out) + Na(+)(out). Functionally, synaptic vesicle transporter with apparent selectivity for neutral amino acids. The transport is sodium-coupled but chloride-independent, likely driven by the proton electrochemical gradient generated by vacuolar H(+)-ATPase in an overall electrogenic mechanism. May contribute to the synaptic uptake of neurotransmitter precursors in a process coupled in part to vesicle exocytosis. In Rattus norvegicus (Rat), this protein is Sodium-dependent neutral amino acid transporter SLC6A17.